A 119-amino-acid polypeptide reads, in one-letter code: uncharacterized protein (119 aa).

The first 23 residues, 1-23 (MVKWAVSILVNALLLIVIDGYID), serve as a signal peptide directing secretion. Helical transmembrane passes span 27-47 (ISSI…NVLI), 50-70 (LLII…LFVI), and 88-108 (IDGF…HLLI).

The protein localises to the cell membrane. This is an uncharacterized protein from Bacillus subtilis (strain 168).